Here is a 229-residue protein sequence, read N- to C-terminus: Leucyl/phenylalanyl-tRNA--protein transferase (229 aa).

It belongs to the L/F-transferase family.

It localises to the cytoplasm. It catalyses the reaction N-terminal L-lysyl-[protein] + L-leucyl-tRNA(Leu) = N-terminal L-leucyl-L-lysyl-[protein] + tRNA(Leu) + H(+). The enzyme catalyses N-terminal L-arginyl-[protein] + L-leucyl-tRNA(Leu) = N-terminal L-leucyl-L-arginyl-[protein] + tRNA(Leu) + H(+). It carries out the reaction L-phenylalanyl-tRNA(Phe) + an N-terminal L-alpha-aminoacyl-[protein] = an N-terminal L-phenylalanyl-L-alpha-aminoacyl-[protein] + tRNA(Phe). Its function is as follows. Functions in the N-end rule pathway of protein degradation where it conjugates Leu, Phe and, less efficiently, Met from aminoacyl-tRNAs to the N-termini of proteins containing an N-terminal arginine or lysine. The chain is Leucyl/phenylalanyl-tRNA--protein transferase from Pseudomonas syringae pv. syringae (strain B728a).